The following is a 65-amino-acid chain: Probable tautomerase RSp1151 (65 aa).

The active-site Proton acceptor; via imino nitrogen is Pro-2.

The protein belongs to the 4-oxalocrotonate tautomerase family.

This is Probable tautomerase RSp1151 from Ralstonia nicotianae (strain ATCC BAA-1114 / GMI1000) (Ralstonia solanacearum).